A 1888-amino-acid polypeptide reads, in one-letter code: Eukaryotic translation initiation factor 4G (1888 aa).

Disordered stretches follow at residues 1–259 (MSFN…PTTP), 391–420 (FDNK…TQPL), 449–662 (PLPS…SLQH), 726–761 (VAHS…KNSE), 838–903 (ADVS…DGEV), 961–1042 (AYKR…SGDR), 1083–1138 (TNVS…DPRL), 1331–1356 (GERE…EREE), 1462–1605 (KWQQ…PGDL), and 1639–1691 (RFAG…PSLP). Composition is skewed to polar residues over residues 13–36 (GYTQ…SGTH) and 75–84 (VNSTDSSNAP). A compositionally biased stretch (basic and acidic residues) spans 171 to 183 (DEQKRDQARHESF). Pro residues predominate over residues 185–195 (PVPPMPIPLAP). Polar residues-rich tracts occupy residues 211-231 (NVGQ…NTGD), 244-259 (ASPN…PTTP), 393-405 (NKQS…TGTS), and 458-475 (NSQP…SQNV). The span at 497 to 506 (PNREHTRDTH) shows a compositional bias: basic and acidic residues. Positions 586–596 (IKSSPVISKQF) are enriched in polar residues. Low complexity predominate over residues 603-630 (VSLESQDSSSVQSSLTASSEESELAVAH). Residues 631 to 645 (SEVRRENLLGSDLHK) show a composition bias toward basic and acidic residues. The span at 840-850 (VSASVSSSSTV) shows a compositional bias: low complexity. Over residues 869–885 (NMSSNEVLKNVVKSDQP) the composition is skewed to polar residues. Basic and acidic residues predominate over residues 963–983 (KRPEEKKETVAHSESIERTES). The segment at 1048–1093 (KKYSRDFLLKFAEQFLDLPHNFEVTSDIESLMSTHTNVSHHHDRDP) is EIF4E-binding. Positions 1109-1124 (RLDRRGSNLVDDDRWS) are enriched in basic and acidic residues. Residues 1239-1462 (QRQLKAILNK…KDAIDLRKNK (224 aa)) enclose the MIF4G domain. Basic and acidic residues-rich tracts occupy residues 1467-1484 (RKVE…DAAQ) and 1661-1674 (KDLR…DRSR). Residues 1700–1824 (RLQQLSLTAI…SLREVADLIC (125 aa)) form the MI domain.

It belongs to the eukaryotic initiation factor 4G family. EIF4F is a multi-subunit complex, the composition of which varies with external and internal environmental conditions. It is composed of at least EIF4A, EIF4E and EIF4G. Interacts directly with eIF4E. In higher plants two isoforms of EIF4F have been identified, named isoform EIF4F and isoform EIF(iso)4F. Isoform EIF4F has subunits p220 and p26, whereas isoform EIF(iso)4F has subunits p82 and p28.

Functionally, component of the protein complex eIF4F, which is involved in the recognition of the mRNA cap, ATP-dependent unwinding of 5'-terminal secondary structure and recruitment of mRNA to the ribosome. In Cucumis melo (Muskmelon), this protein is Eukaryotic translation initiation factor 4G.